The primary structure comprises 127 residues: MFRTMMRAKLHRATVTEANLNYVGSITIDEDLMDAVNIVENEKVQIVNNNNGARLETYVIKGERGSGVVCLNGAAARLVQPGDKVIIICYGLVTEEEIHTQEPKIAVLDDNNQIIEMLGAEKAGTIL.

Serine 25 (schiff-base intermediate with substrate; via pyruvic acid) is an active-site residue. Serine 25 carries the post-translational modification Pyruvic acid (Ser). Residue threonine 57 coordinates substrate. Catalysis depends on tyrosine 58, which acts as the Proton donor. Residue 73 to 75 (GAA) participates in substrate binding.

It belongs to the PanD family. As to quaternary structure, heterooctamer of four alpha and four beta subunits. Requires pyruvate as cofactor. Is synthesized initially as an inactive proenzyme, which is activated by self-cleavage at a specific serine bond to produce a beta-subunit with a hydroxyl group at its C-terminus and an alpha-subunit with a pyruvoyl group at its N-terminus.

It localises to the cytoplasm. It catalyses the reaction L-aspartate + H(+) = beta-alanine + CO2. The protein operates within cofactor biosynthesis; (R)-pantothenate biosynthesis; beta-alanine from L-aspartate: step 1/1. Functionally, catalyzes the pyruvoyl-dependent decarboxylation of aspartate to produce beta-alanine. The polypeptide is Aspartate 1-decarboxylase (Bacillus cereus (strain B4264)).